The primary structure comprises 530 residues: Light-independent protochlorophyllide reductase subunit B (530 aa).

A [4Fe-4S] cluster-binding site is contributed by Asp-36. Asp-287 acts as the Proton donor in catalysis. Position 422 to 423 (422 to 423 (GL)) interacts with substrate. Residues 453 to 472 (PAVQTASSEPQPSAIETPSA) form a disordered region. Residues 454–463 (AVQTASSEPQ) show a composition bias toward polar residues.

The protein belongs to the ChlB/BchB/BchZ family. As to quaternary structure, protochlorophyllide reductase is composed of three subunits; BchL, BchN and BchB. Forms a heterotetramer of two BchB and two BchN subunits. [4Fe-4S] cluster serves as cofactor.

It catalyses the reaction chlorophyllide a + oxidized 2[4Fe-4S]-[ferredoxin] + 2 ADP + 2 phosphate = protochlorophyllide a + reduced 2[4Fe-4S]-[ferredoxin] + 2 ATP + 2 H2O. It participates in porphyrin-containing compound metabolism; bacteriochlorophyll biosynthesis (light-independent). Component of the dark-operative protochlorophyllide reductase (DPOR) that uses Mg-ATP and reduced ferredoxin to reduce ring D of protochlorophyllide (Pchlide) to form chlorophyllide a (Chlide). This reaction is light-independent. The NB-protein (BchN-BchB) is the catalytic component of the complex. This chain is Light-independent protochlorophyllide reductase subunit B, found in Rhodopseudomonas palustris (strain BisB18).